The sequence spans 238 residues: Uracil-DNA glycosylase (238 aa).

Asp81 (proton acceptor) is an active-site residue.

The protein belongs to the uracil-DNA glycosylase (UDG) superfamily. UNG family.

Its subcellular location is the cytoplasm. It carries out the reaction Hydrolyzes single-stranded DNA or mismatched double-stranded DNA and polynucleotides, releasing free uracil.. Its function is as follows. Excises uracil residues from the DNA which can arise as a result of misincorporation of dUMP residues by DNA polymerase or due to deamination of cytosine. This Corynebacterium efficiens (strain DSM 44549 / YS-314 / AJ 12310 / JCM 11189 / NBRC 100395) protein is Uracil-DNA glycosylase.